A 76-amino-acid polypeptide reads, in one-letter code: Small ribosomal subunit protein bS18 (76 aa).

Belongs to the bacterial ribosomal protein bS18 family. As to quaternary structure, part of the 30S ribosomal subunit. Forms a tight heterodimer with protein bS6.

Functionally, binds as a heterodimer with protein bS6 to the central domain of the 16S rRNA, where it helps stabilize the platform of the 30S subunit. The protein is Small ribosomal subunit protein bS18 of Carboxydothermus hydrogenoformans (strain ATCC BAA-161 / DSM 6008 / Z-2901).